The primary structure comprises 406 residues: Transcriptional activator NprA (406 aa).

4 TPR repeats span residues 125-158, 206-239, 246-279, and 285-318; these read YYYY…FRSQ, AECH…AQII, GTIE…KRNS, and FITL…LKRE.

Activates the transcription of nprS by about five fold. May bind to the upstream region of nprS promoter. The protein is Transcriptional activator NprA (nprA) of Geobacillus stearothermophilus (Bacillus stearothermophilus).